Here is a 215-residue protein sequence, read N- to C-terminus: Large ribosomal subunit protein uL4 (215 aa).

Residues 43-97 (RRQGTHSTKTRAEVSGGGKKPWRQKGTGRARAGSTRSPIWVGGGKTHTPKPRDYS) form a disordered region.

It belongs to the universal ribosomal protein uL4 family. In terms of assembly, part of the 50S ribosomal subunit.

One of the primary rRNA binding proteins, this protein initially binds near the 5'-end of the 23S rRNA. It is important during the early stages of 50S assembly. It makes multiple contacts with different domains of the 23S rRNA in the assembled 50S subunit and ribosome. Functionally, forms part of the polypeptide exit tunnel. This Brachyspira hyodysenteriae (strain ATCC 49526 / WA1) protein is Large ribosomal subunit protein uL4.